Reading from the N-terminus, the 417-residue chain is UDP-N-acetylglucosamine 1-carboxyvinyltransferase (417 aa).

22–23 (KN) contributes to the phosphoenolpyruvate binding site. Arginine 91 is a UDP-N-acetyl-alpha-D-glucosamine binding site. The active-site Proton donor is the cysteine 115. Cysteine 115 carries the post-translational modification 2-(S-cysteinyl)pyruvic acid O-phosphothioketal. UDP-N-acetyl-alpha-D-glucosamine is bound by residues 120–124 (RPVDL), aspartate 304, and isoleucine 326.

Belongs to the EPSP synthase family. MurA subfamily.

Its subcellular location is the cytoplasm. It catalyses the reaction phosphoenolpyruvate + UDP-N-acetyl-alpha-D-glucosamine = UDP-N-acetyl-3-O-(1-carboxyvinyl)-alpha-D-glucosamine + phosphate. It functions in the pathway cell wall biogenesis; peptidoglycan biosynthesis. Functionally, cell wall formation. Adds enolpyruvyl to UDP-N-acetylglucosamine. The chain is UDP-N-acetylglucosamine 1-carboxyvinyltransferase from Nitratidesulfovibrio vulgaris (strain DSM 19637 / Miyazaki F) (Desulfovibrio vulgaris).